Here is a 243-residue protein sequence, read N- to C-terminus: tRNA (guanine-N(1)-)-methyltransferase (243 aa).

Residues glycine 108 and 127–132 (LGDFVL) each bind S-adenosyl-L-methionine.

This sequence belongs to the RNA methyltransferase TrmD family. Homodimer.

The protein localises to the cytoplasm. It catalyses the reaction guanosine(37) in tRNA + S-adenosyl-L-methionine = N(1)-methylguanosine(37) in tRNA + S-adenosyl-L-homocysteine + H(+). Functionally, specifically methylates guanosine-37 in various tRNAs. This chain is tRNA (guanine-N(1)-)-methyltransferase, found in Streptococcus equi subsp. equi (strain 4047).